The chain runs to 60 residues: Small, acid-soluble spore protein H (60 aa).

It belongs to the SspH family.

It localises to the spore core. This chain is Small, acid-soluble spore protein H, found in Halalkalibacterium halodurans (strain ATCC BAA-125 / DSM 18197 / FERM 7344 / JCM 9153 / C-125) (Bacillus halodurans).